We begin with the raw amino-acid sequence, 248 residues long: Ribonuclease 3 (248 aa).

The region spanning 16–145 (TEGLETSIGY…LLAAMYLDGG (130 aa)) is the RNase III domain. Mg(2+) is bound at residue Glu-58. The active site involves Asp-62. Mg(2+) contacts are provided by Asn-131 and Glu-134. Glu-134 is an active-site residue. Positions 172 to 241 (DFKTDFQELA…ARQCLERLET (70 aa)) constitute a DRBM domain.

Belongs to the ribonuclease III family. As to quaternary structure, homodimer. Mg(2+) serves as cofactor.

The protein resides in the cytoplasm. It carries out the reaction Endonucleolytic cleavage to 5'-phosphomonoester.. Digests double-stranded RNA. Involved in the processing of primary rRNA transcript to yield the immediate precursors to the large and small rRNAs (23S and 16S). Processes some mRNAs, and tRNAs when they are encoded in the rRNA operon. Processes pre-crRNA and tracrRNA of type II CRISPR loci if present in the organism. This Geobacter sulfurreducens (strain ATCC 51573 / DSM 12127 / PCA) protein is Ribonuclease 3.